The chain runs to 377 residues: Exopolygalacturonase (377 aa).

Residues 1–5 (RGVQS) form the signal peptide. PbH1 repeat units lie at residues 159 to 184 (CEDITFQHVTVTAPGTSINTDGIHVG), 186 to 207 (SKGVTITNTKIATGDDCISIGP), 209 to 229 (SQNVTITQVNCGPGHGISIGS), 239 to 260 (VRGITVKGCTFSGTMNGVRVKT), and 269 to 290 (ATDLTFQDLTMNNVQNPVILDQ). Asp-200 functions as the Proton donor in the catalytic mechanism. N-linked (GlcNAc...) asparagine glycosylation occurs at Asn-211. His-223 is a catalytic residue. The N-linked (GlcNAc...) asparagine glycan is linked to Asn-345.

It belongs to the glycosyl hydrolase 28 family. In terms of assembly, monomer. Glycosylated. As to expression, expressed in pollen (at protein level). Expressed in stem, but not in leaves (at protein level).

The protein localises to the secreted. It localises to the cell wall. The protein resides in the golgi apparatus. It is found in the endoplasmic reticulum. Its subcellular location is the vesicle. The enzyme catalyses [(1-&gt;4)-alpha-D-galacturonosyl](n) + H2O = alpha-D-galacturonate + [(1-&gt;4)-alpha-D-galacturonosyl](n-1). Functionally, may function in depolymerizing pectin during pollen development, germination, and tube growth. Acts as an exo-polygalacturonase. The sequence is that of Exopolygalacturonase from Platanus acerifolia (London plane tree).